The chain runs to 284 residues: Small ribosomal subunit protein uS2 (284 aa).

Over residues 250–272 the composition is skewed to low complexity; it reads QELLAGATASPTAAGAAPGTPEA. Positions 250 to 284 are disordered; it reads QELLAGATASPTAAGAAPGTPEADIQTEPTAPQNP.

The protein belongs to the universal ribosomal protein uS2 family.

The chain is Small ribosomal subunit protein uS2 from Mycobacterium sp. (strain KMS).